The sequence spans 292 residues: 4-hydroxy-tetrahydrodipicolinate synthase 2 (292 aa).

Threonine 46 serves as a coordination point for pyruvate. The Proton donor/acceptor role is filled by tyrosine 134. Lysine 162 (schiff-base intermediate with substrate) is an active-site residue. Position 204 (valine 204) interacts with pyruvate.

It belongs to the DapA family. In terms of assembly, homotetramer; dimer of dimers.

It localises to the cytoplasm. It carries out the reaction L-aspartate 4-semialdehyde + pyruvate = (2S,4S)-4-hydroxy-2,3,4,5-tetrahydrodipicolinate + H2O + H(+). It participates in amino-acid biosynthesis; L-lysine biosynthesis via DAP pathway; (S)-tetrahydrodipicolinate from L-aspartate: step 3/4. Its function is as follows. Catalyzes the condensation of (S)-aspartate-beta-semialdehyde [(S)-ASA] and pyruvate to 4-hydroxy-tetrahydrodipicolinate (HTPA). The chain is 4-hydroxy-tetrahydrodipicolinate synthase 2 from Halalkalibacterium halodurans (strain ATCC BAA-125 / DSM 18197 / FERM 7344 / JCM 9153 / C-125) (Bacillus halodurans).